The following is a 185-amino-acid chain: Biogenesis of lysosome-related organelles complex 1 subunit 5 (185 aa).

Residues 1–25 (MSGGGTETPVACDAAQGGKKRDSLG) are disordered. N-acetylserine is present on serine 2.

It belongs to the BLOC1S5 family. As to quaternary structure, octamer composed of one copy each BLOC1S1, BLOC1S2, BLOC1S3, BLOC1S4, BLOC1S5, BLOC1S6, DTNBP1/BLOC1S7 and SNAPIN/BLOC1S8. Component of the biogenesis of lysosome-related organelles complex 1 (BLOC-1) composed of BLOC1S1, BLOC1S2, BLOC1S3, BLOC1S4, BLOC1S5, BLOC1S6, DTNBP1/BLOC1S7 and SNAPIN/BLOC1S8. The BLOC-1 complex associates with the AP-3 protein complex and membrane protein cargos. Interacts with BLOC1S4, BLOC1S6, DTNBP1/BLOC1S7 and PI4K2A. Detected in heart, brain, spleen, lung, kidney and testis.

Component of the BLOC-1 complex, a complex that is required for normal biogenesis of lysosome-related organelles (LRO), such as platelet dense granules and melanosomes. In concert with the AP-3 complex, the BLOC-1 complex is required to target membrane protein cargos into vesicles assembled at cell bodies for delivery into neurites and nerve terminals. The BLOC-1 complex, in association with SNARE proteins, is also proposed to be involved in neurite extension. Plays a role in intracellular vesicle trafficking. This is Biogenesis of lysosome-related organelles complex 1 subunit 5 (Bloc1s5) from Mus musculus (Mouse).